Here is a 318-residue protein sequence, read N- to C-terminus: Biotin synthase (318 aa).

The Radical SAM core domain maps to 44-273; sequence LCGNKFDLCT…TVQIRLAGGR (230 aa). Cys62, Cys66, and Cys69 together coordinate [4Fe-4S] cluster. [2Fe-2S] cluster-binding residues include Ser106, Cys138, Cys198, and Arg268.

Belongs to the radical SAM superfamily. Biotin synthase family. As to quaternary structure, homodimer. The cofactor is [4Fe-4S] cluster. [2Fe-2S] cluster serves as cofactor.

It carries out the reaction (4R,5S)-dethiobiotin + (sulfur carrier)-SH + 2 reduced [2Fe-2S]-[ferredoxin] + 2 S-adenosyl-L-methionine = (sulfur carrier)-H + biotin + 2 5'-deoxyadenosine + 2 L-methionine + 2 oxidized [2Fe-2S]-[ferredoxin]. It participates in cofactor biosynthesis; biotin biosynthesis; biotin from 7,8-diaminononanoate: step 2/2. In terms of biological role, catalyzes the conversion of dethiobiotin (DTB) to biotin by the insertion of a sulfur atom into dethiobiotin via a radical-based mechanism. This is Biotin synthase from Clostridium botulinum (strain Loch Maree / Type A3).